A 134-amino-acid polypeptide reads, in one-letter code: ATP synthase epsilon chain, chloroplastic (134 aa).

It belongs to the ATPase epsilon chain family. As to quaternary structure, F-type ATPases have 2 components, CF(1) - the catalytic core - and CF(0) - the membrane proton channel. CF(1) has five subunits: alpha(3), beta(3), gamma(1), delta(1), epsilon(1). CF(0) has three main subunits: a, b and c.

It is found in the plastid. It localises to the chloroplast thylakoid membrane. Functionally, produces ATP from ADP in the presence of a proton gradient across the membrane. This chain is ATP synthase epsilon chain, chloroplastic, found in Liriodendron tulipifera (Tuliptree).